A 314-amino-acid chain; its full sequence is E3 ubiquitin-protein ligase SINA-like 11 (314 aa).

The segment covering methionine 1–threonine 12 has biased composition (polar residues). Positions methionine 1 to arginine 31 are disordered. Positions serine 13–lysine 23 are enriched in basic residues. Residues cysteine 43 to aspartate 81 form an RING-type; degenerate zinc finger. An SBD region spans residues valine 95–isoleucine 280. The segment at serine 98–leucine 156 adopts an SIAH-type zinc-finger fold. Zn(2+) contacts are provided by cysteine 103, cysteine 110, histidine 122, cysteine 126, cysteine 133, cysteine 138, histidine 150, and histidine 155.

Belongs to the SINA (Seven in absentia) family.

The enzyme catalyses S-ubiquitinyl-[E2 ubiquitin-conjugating enzyme]-L-cysteine + [acceptor protein]-L-lysine = [E2 ubiquitin-conjugating enzyme]-L-cysteine + N(6)-ubiquitinyl-[acceptor protein]-L-lysine.. The protein operates within protein modification; protein ubiquitination. In terms of biological role, E3 ubiquitin-protein ligase that mediates ubiquitination and subsequent proteasomal degradation of target proteins. E3 ubiquitin ligases accept ubiquitin from an E2 ubiquitin-conjugating enzyme in the form of a thioester and then directly transfers the ubiquitin to targeted substrates. It probably triggers the ubiquitin-mediated degradation of different substrates. The sequence is that of E3 ubiquitin-protein ligase SINA-like 11 from Arabidopsis thaliana (Mouse-ear cress).